Consider the following 798-residue polypeptide: MESTADGDKARGEEPVAEGEASDIRRGDGEFPAPEDEHPDDGEPDEPADRDDRSGESDADSGYYSADGGRDAECDGEAARPDTPTDESSAPTTPSTAVRRSSGESSPDRGGCFSHSSDSELGCATETRDPFAAGLRKCIERQAMILTGALKDAHVDPPLDSMPLTVDAVQRQLERFLFNPDPKVPREHVELATTFMPPFMTPKAIANYHIFCGNRPIPPSCKANRSGSEVLRAAENARFFKRLPRWKQGVTVDDGLGDEVSPITELKDAKLVPLRDDTSRLEWAKMRGEHVRYFCYPSLHMPPKISRMLMEVLLQPFAQEVASGPDQEDPEPVYPTAELACIVDPEGVMQPHGLARAIEVDGHGSAGRPLYRSARAYGSVFREPSSIKKAQEVLHHTFHHGFVALIRETAKVNLSNYATFHGITYNDPLNNCMLAKLMEGSDKRDYVVDSIYLFLVLTWQTAMGMWQQAIQEETIEAYREAFTRLRRAIYALETPTEISKAIVDVLMDGDRLCAEMPKLPNFTNGSQISAFRQFIMERSNIPTTAAPFLPSDFVPLSFRQAQPLLWDQVYLLQTAFFLCNHGGYLWEPEETENPNPRDRTYCPCNLCSPHRMPQHNVPLHNELLAINTFEIRTDDGKTFKLTPELWANAYLDKFEPKDYHPFEVVHFPQHEEAFSRDLTACVTKSPEILSLIRQIQASREEFLLTRGKGVYKDPDTGEVLTPQPDLQAGAARRQALPTAYADHARGAATSAEPSRALRPTSVATAAGNRTRGCSSARYRLGPTLRRRSNSSWPREWST.

A compositionally biased stretch (basic and acidic residues) spans methionine 1 to glutamate 14. Residues methionine 1–cysteine 123 form a disordered region. Residues alanine 33–aspartate 49 are compositionally biased toward acidic residues. Basic and acidic residues predominate over residues glycine 68 to arginine 80. The segment covering aspartate 86–serine 105 has biased composition (polar residues). A binding to host EIF4G region spans residues leucine 309–alanine 376. Residues serine 379–glutamate 497 enclose the RRM domain. Tyrosine 711 carries the post-translational modification Phosphotyrosine; by host. A disordered region spans residues tyrosine 740–threonine 798. Residues asparagine 789–threonine 798 are compositionally biased toward polar residues.

It belongs to the adenoviridae shutoff protein family. In terms of assembly, monomer. Interacts with hexon protein; this interaction allows chaperoning and trimerization of hexon proteins. Interacts (via N-terminus) with host initiation factor EIF4G (via C-terminus). Interacts (via RRM domain) with viral mRNAs that contain the tripartite leader; this interaction allows ribosome shunting and expression of viral late mRNAs. In terms of processing, might be cleaved by the viral protease. Phosphorylated. Tyrosine phosphorylation enhances preferential binding to tripartite leader mRNAs and allows ribosome shunting. Post-translationally, methylated. Asymmetric dimethylation by host PRMT1 of the Arg/Gly-rich region may regulate shutoff protein binding to hexon and promote the capsid assembly in the nucleus.

Its subcellular location is the host cytoplasm. In terms of biological role, protein that inhibits host translation while promoting late viral translation by ribosome shunting. Blocks host cap-dependent translation by binding to eIF4G, displacing MKNK1 from cap initiation complexes and preventing EIF4E phosphorylation. Binds to the tripartite leader sequence of viral late mRNAs and recruits host eIF4G, PABPC1/poly-A binding protein and 40S ribosomes subunits on viral mRNAs, allowing ribosome shunting and efficient translation of late viral mRNAs even though conventional translation via ribosome scanning from the cap has been shut off in the host cell. During assembly, acts as a chaperone protein that helps hexon proteins assembly into trimers. The sequence is that of Shutoff protein from Galliformes (FAdV-10).